Reading from the N-terminus, the 358-residue chain is Chondroadherin (358 aa).

A signal peptide spans 1-20 (MARVLLLSLVFLAILLPALA). An LRRNT domain is found at 21–50 (ACPQNCHCHGDLQHVICDKVGLQKIPKVSE). Cysteine 22 and cysteine 37 are joined by a disulfide. 10 LRR repeats span residues 51–72 (TTKL…SFRT), 75–96 (NLVS…AFRG), 99–120 (QLIY…AFDD), 123–144 (ELTY…LLSP), 147–168 (NLFI…AFQG), 171–192 (DLRW…SLDD), 195–216 (NLAK…ALSK), 219–240 (VVEE…AFQS), 244–265 (YLET…AFAG), and 268–289 (TLKH…FPFD). An O-linked (GalNAc...) serine glycan is attached at serine 143. An LRRCT domain is found at 299-347 (NPWKCTCQLRGLRRWLEAKTSRPDATCSSPAKFKGQRIRDTDALRSCKS). Disulfide bonds link cysteine 303–cysteine 345 and cysteine 305–cysteine 325. Residues 321–358 (PDATCSSPAKFKGQRIRDTDALRSCKSPTKRSKKAGRH) are disordered. Residues 348 to 358 (PTKRSKKAGRH) show a composition bias toward basic residues.

The protein belongs to the small leucine-rich proteoglycan (SLRP) family. SLRP class IV subfamily. Mostly monomeric. Present in femoral head and rib cartilage, as well as in tendon. Detected in bone marrow.

The protein resides in the secreted. The protein localises to the extracellular space. Its subcellular location is the extracellular matrix. Promotes attachment of chondrocytes, fibroblasts, and osteoblasts. This binding is mediated (at least for chondrocytes and fibroblasts) by the integrin alpha(2)beta(1). May play an important role in the regulation of chondrocyte growth and proliferation. This Rattus norvegicus (Rat) protein is Chondroadherin (Chad).